We begin with the raw amino-acid sequence, 474 residues long: tRNA-2-methylthio-N(6)-dimethylallyladenosine synthase (474 aa).

In terms of domain architecture, MTTase N-terminal spans 3 to 120 (KKLLIKTWGC…LPEMIKQSQS (118 aa)). Cys-12, Cys-49, Cys-83, Cys-157, Cys-161, and Cys-164 together coordinate [4Fe-4S] cluster. The Radical SAM core domain maps to 143-375 (RAEGATAFVS…QQTVNTQAMR (233 aa)). Residues 378–441 (RQMLDTEQRV…ANSLRGELVR (64 aa)) enclose the TRAM domain.

Belongs to the methylthiotransferase family. MiaB subfamily. In terms of assembly, monomer. [4Fe-4S] cluster is required as a cofactor.

The protein localises to the cytoplasm. It carries out the reaction N(6)-dimethylallyladenosine(37) in tRNA + (sulfur carrier)-SH + AH2 + 2 S-adenosyl-L-methionine = 2-methylsulfanyl-N(6)-dimethylallyladenosine(37) in tRNA + (sulfur carrier)-H + 5'-deoxyadenosine + L-methionine + A + S-adenosyl-L-homocysteine + 2 H(+). Functionally, catalyzes the methylthiolation of N6-(dimethylallyl)adenosine (i(6)A), leading to the formation of 2-methylthio-N6-(dimethylallyl)adenosine (ms(2)i(6)A) at position 37 in tRNAs that read codons beginning with uridine. The protein is tRNA-2-methylthio-N(6)-dimethylallyladenosine synthase of Vibrio campbellii (strain ATCC BAA-1116).